A 372-amino-acid polypeptide reads, in one-letter code: 4-hydroxy-3-methylbut-2-en-1-yl diphosphate synthase (flavodoxin) (372 aa).

4 residues coordinate [4Fe-4S] cluster: C270, C273, C305, and E312.

Belongs to the IspG family. The cofactor is [4Fe-4S] cluster.

The catalysed reaction is (2E)-4-hydroxy-3-methylbut-2-enyl diphosphate + oxidized [flavodoxin] + H2O + 2 H(+) = 2-C-methyl-D-erythritol 2,4-cyclic diphosphate + reduced [flavodoxin]. It functions in the pathway isoprenoid biosynthesis; isopentenyl diphosphate biosynthesis via DXP pathway; isopentenyl diphosphate from 1-deoxy-D-xylulose 5-phosphate: step 5/6. In terms of biological role, converts 2C-methyl-D-erythritol 2,4-cyclodiphosphate (ME-2,4cPP) into 1-hydroxy-2-methyl-2-(E)-butenyl 4-diphosphate. The chain is 4-hydroxy-3-methylbut-2-en-1-yl diphosphate synthase (flavodoxin) from Shewanella amazonensis (strain ATCC BAA-1098 / SB2B).